The sequence spans 429 residues: MGEKGHLSRVLLECSLSDKLCVVREKQYEVIIVPALLVGGFLILLAIILWLFIRGQRSQRQSPGPRGTASVPASRGRSQEAAGHGEKVLLPLKETSVEGFLRAATPRLAKLQVPREQLLEVLEQIHSGSCGTLYHATMTTKDHPKPKSVVLKALEDPVGLQEVQDFIGRIQFYQYLGKHKNLVQLEGCCTERLPLYMMLEDVVPGDLLSFLWTCRRDVMTMDGLLYDLTEKQIYHIGKQILLALEFLQEKHLFHGDVAARNILIQSDLTPKLCHLGLAYEVHAHGAISSARSSTIPLKWLAPERLLLRPASIRGDIWSFGILLYEMVTLGAPPYPEVPPTSILQYLQRKKIMKRPSSCSHAMYNIMKCCWRWSEDSRPLLGQLLQRLEAASRSADDKAVLQVPELVVPELYADVAGIRAESISYSFSVL.

The helical transmembrane segment at 30-50 (VIIVPALLVGGFLILLAIILW) threads the bilayer. The segment at 58–83 (SQRQSPGPRGTASVPASRGRSQEAAG) is disordered. One can recognise a Protein kinase domain in the interval 119 to 390 (LEVLEQIHSG…GQLLQRLEAA (272 aa)). Residues 125–133 (IHSGSCGTL) and Lys-152 each bind ATP. The Proton acceptor role is filled by Asp-256.

The protein belongs to the protein kinase superfamily. Tyr protein kinase family. Highly expressed in colon and small intestine. Weakly or not expressed in spleen, skeletal muscle, liver, kidney, heart and brain. Expressed in transformed kidney cell lines (COS-1 and HEK293T).

Its subcellular location is the membrane. It catalyses the reaction L-tyrosyl-[protein] + ATP = O-phospho-L-tyrosyl-[protein] + ADP + H(+). Probable tyrosine protein-kinase, which has strong transforming capabilities on a variety of cell lines including NIH 3T3 fibroblasts and on athymic nude mice. When overexpressed, it can also induce tumor cell invasion as well as metastasis in distant organs. May act by activating both MAP kinase and phosphatidylinositol 3'-kinases (PI3K) pathways. The polypeptide is Tyrosine-protein kinase STYK1 (Styk1) (Mus musculus (Mouse)).